The following is a 536-amino-acid chain: Putative cysteine ligase BshC (536 aa).

This sequence belongs to the BshC family.

Involved in bacillithiol (BSH) biosynthesis. May catalyze the last step of the pathway, the addition of cysteine to glucosamine malate (GlcN-Mal) to generate BSH. This is Putative cysteine ligase BshC from Anoxybacillus flavithermus (strain DSM 21510 / WK1).